Consider the following 66-residue polypeptide: Large ribosomal subunit protein uL29 (66 aa).

This sequence belongs to the universal ribosomal protein uL29 family.

This is Large ribosomal subunit protein uL29 from Rhizobium meliloti (strain 1021) (Ensifer meliloti).